Here is a 104-residue protein sequence, read N- to C-terminus: UPF0213 protein ORF82 (104 aa).

The 77-residue stretch at 7–83 folds into the GIY-YIG domain; sequence KVWCVYIVRR…KRKRGKYFKL (77 aa).

It belongs to the UPF0213 family.

This Orgyia pseudotsugata (Douglas-fir tussock moth) protein is UPF0213 protein ORF82.